The sequence spans 332 residues: tRNA-dihydrouridine synthase B (332 aa).

Residues Pro-16–Ala-18 and Gln-70 each bind FMN. Cys-100 functions as the Proton donor in the catalytic mechanism. Residues Lys-139, Asn-200 to Asp-202, and Gly-224 to Arg-225 each bind FMN.

This sequence belongs to the Dus family. DusB subfamily. FMN serves as cofactor.

The catalysed reaction is a 5,6-dihydrouridine in tRNA + NAD(+) = a uridine in tRNA + NADH + H(+). It carries out the reaction a 5,6-dihydrouridine in tRNA + NADP(+) = a uridine in tRNA + NADPH + H(+). In terms of biological role, catalyzes the synthesis of 5,6-dihydrouridine (D), a modified base found in the D-loop of most tRNAs, via the reduction of the C5-C6 double bond in target uridines. The polypeptide is tRNA-dihydrouridine synthase B (Xanthomonas axonopodis pv. citri (strain 306)).